A 238-amino-acid chain; its full sequence is Covalently-linked cell wall protein 14 (238 aa).

The signal sequence occupies residues 1 to 22; the sequence is MRATTLLSSVVSLALLSKEVLA. Positions 23–110 constitute a CFEM domain; that stretch reads TPPACLLACV…ASSSSKASSS (88 aa). Disulfide bonds link C27-C67, C31-C62, C42-C50, and C52-C83. N87 carries N-linked (GlcNAc...) asparagine glycosylation. The disordered stretch occupies residues 91–203; the sequence is GDSSSSASSS…TVSQETVSSA (113 aa). The segment covering 93-203 has biased composition (low complexity); it reads SSSSASSSAS…TVSQETVSSA (111 aa). K161 is covalently cross-linked (Glycyl lysine isopeptide (Lys-Gly) (interchain with G-Cter in ubiquitin)). G217 carries the GPI-anchor amidated glycine lipid modification. Positions 218–238 are cleaved as a propeptide — removed in mature form; sequence SGNVLEAGKSVFIAAVAAMLI.

Belongs to the CCW14 family. In terms of processing, extensively O-glycosylated. Post-translationally, the GPI-anchor is attached to the protein in the endoplasmic reticulum and serves to target the protein to the cell surface. There, the glucosamine-inositol phospholipid moiety is cleaved off and the GPI-modified mannoprotein is covalently attached via its lipidless GPI glycan remnant to the 1,6-beta-glucan of the outer cell wall layer.

It is found in the secreted. Its subcellular location is the cell wall. It localises to the membrane. Functionally, component of the inner layer of the cell wall. In Saccharomyces cerevisiae (strain ATCC 204508 / S288c) (Baker's yeast), this protein is Covalently-linked cell wall protein 14 (CCW14).